Consider the following 503-residue polypeptide: Transmembrane protein 184C (503 aa).

Transmembrane regions (helical) follow at residues Leu17–Phe37, Val48–Leu68, Ile83–Tyr103, Glu115–Ile135, Tyr212–Tyr232, Val254–Ile274, and Ala287–Ala307. Disordered stretches follow at residues Pro358–Gly391 and Ser479–Ser503. The span at Ser373–Ser388 shows a compositional bias: low complexity. The span at Pro494–Ser503 shows a compositional bias: polar residues.

It belongs to the TMEM184 family.

It localises to the membrane. Its function is as follows. Possible tumor suppressor which may play a role in cell growth. The sequence is that of Transmembrane protein 184C (Tmem184c) from Rattus norvegicus (Rat).